Reading from the N-terminus, the 268-residue chain is Oxygen-evolving enhancer protein 2-1, chloroplastic (268 aa).

The N-terminal 82 residues, 1 to 82, are a transit peptide targeting the chloroplast; that stretch reads MASTQCFLHQ…IGSKVSPADA (82 aa).

This sequence belongs to the PsbP family.

Its subcellular location is the plastid. The protein resides in the chloroplast thylakoid membrane. Its function is as follows. May be involved in the regulation of photosystem II. In Nicotiana tabacum (Common tobacco), this protein is Oxygen-evolving enhancer protein 2-1, chloroplastic (PSBP1).